Reading from the N-terminus, the 263-residue chain is HTH-type transcriptional repressor NanR (263 aa).

A disordered region spans residues 1–22; sequence MGLMNAFDSQTEDSSPAIGRNL. The region spanning 30-98 is the HTH gntR-type domain; the sequence is KKLSEMVEEE…NGERARVSRP (69 aa). A DNA-binding region (H-T-H motif) is located at residues 58–77; it reads ERELMAFFNVGRPSVREALA.

It belongs to the NanR family.

Functionally, transcriptional repressor that controls expression of the genes required for the catabolism of sialic acids. This chain is HTH-type transcriptional repressor NanR, found in Shigella sonnei (strain Ss046).